We begin with the raw amino-acid sequence, 140 residues long: PDZ domain-containing protein 11 (140 aa).

Residues threonine 47–tyrosine 129 enclose the PDZ domain.

The protein localises to the cytoplasm. The polypeptide is PDZ domain-containing protein 11 (PDZD11) (Gallus gallus (Chicken)).